Here is a 231-residue protein sequence, read N- to C-terminus: 5'-methylthioadenosine/S-adenosylhomocysteine nucleosidase (231 aa).

Glu-12 functions as the Proton acceptor in the catalytic mechanism. Substrate-binding positions include Gly-78, Met-153, and 174-175; that span reads ME. Asp-198 functions as the Proton donor in the catalytic mechanism.

This sequence belongs to the PNP/UDP phosphorylase family. MtnN subfamily.

The catalysed reaction is S-adenosyl-L-homocysteine + H2O = S-(5-deoxy-D-ribos-5-yl)-L-homocysteine + adenine. The enzyme catalyses S-methyl-5'-thioadenosine + H2O = 5-(methylsulfanyl)-D-ribose + adenine. It catalyses the reaction 5'-deoxyadenosine + H2O = 5-deoxy-D-ribose + adenine. It functions in the pathway amino-acid biosynthesis; L-methionine biosynthesis via salvage pathway; S-methyl-5-thio-alpha-D-ribose 1-phosphate from S-methyl-5'-thioadenosine (hydrolase route): step 1/2. In terms of biological role, catalyzes the irreversible cleavage of the glycosidic bond in both 5'-methylthioadenosine (MTA) and S-adenosylhomocysteine (SAH/AdoHcy) to adenine and the corresponding thioribose, 5'-methylthioribose and S-ribosylhomocysteine, respectively. Also cleaves 5'-deoxyadenosine, a toxic by-product of radical S-adenosylmethionine (SAM) enzymes, into 5-deoxyribose and adenine. The chain is 5'-methylthioadenosine/S-adenosylhomocysteine nucleosidase from Bacillus pumilus (strain SAFR-032).